Reading from the N-terminus, the 727-residue chain is DNA topoisomerase 3 (727 aa).

A Toprim domain is found at 3-136 (KTVVLAEKPS…IKRLWISSVT (134 aa)). Residues Glu-9 and Asp-105 each contribute to the Mg(2+) site. Positions 153–593 (YENLYHSAVA…DMKAYAHQTV (441 aa)) constitute a Topo IA-type catalytic domain. The segment at 187–192 (SCGRVQ) is interaction with DNA. Tyr-310 serves as the catalytic O-(5'-phospho-DNA)-tyrosine intermediate. A compositionally biased stretch (basic and acidic residues) spans 685–699 (KRKNKDKARATKRDV). The disordered stretch occupies residues 685–714 (KRKNKDKARATKRDVSSYMKKQNKDEPINN).

The protein belongs to the type IA topoisomerase family. Mg(2+) is required as a cofactor.

It carries out the reaction ATP-independent breakage of single-stranded DNA, followed by passage and rejoining.. Releases the supercoiling and torsional tension of DNA, which is introduced during the DNA replication and transcription, by transiently cleaving and rejoining one strand of the DNA duplex. Introduces a single-strand break via transesterification at a target site in duplex DNA. The scissile phosphodiester is attacked by the catalytic tyrosine of the enzyme, resulting in the formation of a DNA-(5'-phosphotyrosyl)-enzyme intermediate and the expulsion of a 3'-OH DNA strand. The free DNA strand then undergoes passage around the unbroken strand, thus removing DNA supercoils. Finally, in the religation step, the DNA 3'-OH attacks the covalent intermediate to expel the active-site tyrosine and restore the DNA phosphodiester backbone. This Bacillus subtilis (strain 168) protein is DNA topoisomerase 3.